The primary structure comprises 218 residues: Small ribosomal subunit protein uS3c (218 aa).

Residues 43–118 (IKNYVQKNPR…RLNIAIARIS (76 aa)) enclose the KH type-2 domain.

This sequence belongs to the universal ribosomal protein uS3 family. As to quaternary structure, part of the 30S ribosomal subunit.

The protein resides in the plastid. The protein localises to the chloroplast. The sequence is that of Small ribosomal subunit protein uS3c (rps3) from Acorus calamus (Sweet flag).